Reading from the N-terminus, the 289-residue chain is 7-methylguanosine phosphate-specific 5'-nucleotidase (289 aa).

D38 functions as the Nucleophile in the catalytic mechanism. Positions 38 and 40 each coordinate Mg(2+). D40 (proton donor) is an active-site residue. CMP is bound at residue E85. E85 provides a ligand contact to N(7)-methyl-GMP. Residues 153–154 and K202 contribute to the substrate site; that span reads SA. D227 is a Mg(2+) binding site.

The protein belongs to the pyrimidine 5'-nucleotidase family. As to quaternary structure, monomer.

It localises to the cytoplasm. The catalysed reaction is N(7)-methyl-GMP + H2O = N(7)-methylguanosine + phosphate. The enzyme catalyses CMP + H2O = cytidine + phosphate. It catalyses the reaction a ribonucleoside 5'-phosphate + H2O = a ribonucleoside + phosphate. Functionally, specifically hydrolyzes 7-methylguanosine monophosphate (m(7)GMP) to 7-methylguanosine and inorganic phosphate. The specific activity for m(7)GMP may protect cells against undesired salvage of m(7)GMP and its incorporation into nucleic acids. Also has weak activity for CMP. UMP and purine nucleotides are poor substrates. This is 7-methylguanosine phosphate-specific 5'-nucleotidase (NT5C3B) from Gallus gallus (Chicken).